A 422-amino-acid polypeptide reads, in one-letter code: Protein phosphatase 1 regulatory subunit 36 (422 aa).

In terms of assembly, interacts with PPP1CA.

In terms of biological role, inhibits phosphatase activity of protein phosphatase 1 (PP1) complexes. This Homo sapiens (Human) protein is Protein phosphatase 1 regulatory subunit 36 (PPP1R36).